A 293-amino-acid polypeptide reads, in one-letter code: Glycine--tRNA ligase alpha subunit (293 aa).

The protein belongs to the class-II aminoacyl-tRNA synthetase family. Tetramer of two alpha and two beta subunits.

The protein localises to the cytoplasm. The enzyme catalyses tRNA(Gly) + glycine + ATP = glycyl-tRNA(Gly) + AMP + diphosphate. The sequence is that of Glycine--tRNA ligase alpha subunit from Prochlorococcus marinus (strain MIT 9211).